Reading from the N-terminus, the 62-residue chain is Large ribosomal subunit protein bL33 (62 aa).

It belongs to the bacterial ribosomal protein bL33 family.

This is Large ribosomal subunit protein bL33 from Phocaeicola vulgatus (strain ATCC 8482 / DSM 1447 / JCM 5826 / CCUG 4940 / NBRC 14291 / NCTC 11154) (Bacteroides vulgatus).